A 742-amino-acid polypeptide reads, in one-letter code: Two-component response regulator-like PRR37 (742 aa).

Residues 63–181 (KVLLVDSDDS…ELKNLWQHVW (119 aa)) enclose the Response regulatory domain. The segment covering 186 to 195 (SSSGSGSESG) has biased composition (low complexity). Disordered regions lie at residues 186–249 (SSSG…SWTK), 290–346 (PCTS…PLQN), 377–402 (QQAA…NRDN), 478–517 (MKSN…NKER), 533–568 (FHPA…GEVQ), 590–671 (NGGS…GNDM), and 697–742 (NFGK…AADR). Polar residues predominate over residues 236 to 248 (DNGSGTQAQSSWT). Over residues 299 to 313 (KQKETNDDFKGKDLE) the composition is skewed to basic and acidic residues. Positions 318–330 (RNLNTAYQSSPNE) are enriched in polar residues. Over residues 331–341 (RSIKPTDRRNE) the composition is skewed to basic and acidic residues. Low complexity predominate over residues 490–502 (GSNGSSNNNDMGS). Residues 503 to 512 (TTKNVVTKPS) show a composition bias toward polar residues. Residues 618-634 (NGSNSGSNNGSNGQNGS) show a composition bias toward low complexity. Residues 656-667 (GPGGGNGSGSGS) show a composition bias toward gly residues. Positions 682 to 724 (RVAAVIKFRQKRKERNFGKKVRYQSRKRLAEQRPRVRGQFVRQ) constitute a CCT domain. The span at 697 to 708 (NFGKKVRYQSRK) shows a compositional bias: basic residues. Over residues 719-731 (GQFVRQAVQDQQQ) the composition is skewed to low complexity.

The protein belongs to the ARR-like family.

Its subcellular location is the nucleus. In terms of biological role, probable transcription factor involved in the regulation of flowering time under long day (LD) conditions. Functions as a repressor of flowering. Controls flowering time by negatively regulating the expression of HD3A. Acts downstream of the phytochrome B to repress the expression of EHD1, an activator of the flowering promoter genes HD3A and RFT1. Controls photoperiodic flowering response. Seems to be one of the component of the circadian clock. Expression of several members of the ARR-like family is controlled by circadian rhythm. The particular coordinated sequential expression of PRR73, PRR37, PRR95, PRR59 and PPR1 result to circadian waves that may be at the basis of the endogenous circadian clock. This Oryza sativa subsp. japonica (Rice) protein is Two-component response regulator-like PRR37.